The sequence spans 327 residues: Methionyl-tRNA formyltransferase (327 aa).

Ser-121 to Pro-124 lines the (6S)-5,6,7,8-tetrahydrofolate pocket.

It belongs to the Fmt family.

It carries out the reaction L-methionyl-tRNA(fMet) + (6R)-10-formyltetrahydrofolate = N-formyl-L-methionyl-tRNA(fMet) + (6S)-5,6,7,8-tetrahydrofolate + H(+). Functionally, attaches a formyl group to the free amino group of methionyl-tRNA(fMet). The formyl group appears to play a dual role in the initiator identity of N-formylmethionyl-tRNA by promoting its recognition by IF2 and preventing the misappropriation of this tRNA by the elongation apparatus. This chain is Methionyl-tRNA formyltransferase, found in Burkholderia pseudomallei (strain 1710b).